The chain runs to 287 residues: Cell wall-binding protein YocH (287 aa).

The signal sequence occupies residues 1–25; the sequence is MKKTIMSFVAVAALSTTAFGAHASA. LysM domains are found at residues 26–69 and 78–121; these read KEIT…KLTI and GQYT…TLSV. Residues 130-143 are compositionally biased toward low complexity; that stretch reads TATENAQTNAPQAA. A disordered region spans residues 130–193; sequence TATENAQTNA…SNTNNQEASK (64 aa). Residues 165–181 are compositionally biased toward basic and acidic residues; it reads QETKAEAETSVNTEEKA. The span at 182-193 shows a compositional bias: polar residues; it reads VQSNTNNQEASK.

Its subcellular location is the secreted. It localises to the cell wall. The chain is Cell wall-binding protein YocH (yocH) from Bacillus subtilis (strain 168).